Reading from the N-terminus, the 500-residue chain is Zinc finger protein 689 (500 aa).

Positions Met-1–Arg-24 are disordered. Residues Leu-29 to Arg-100 enclose the KRAB domain. Residues Thr-110–Gln-144 are disordered. Over residues Gln-112–Arg-127 the composition is skewed to basic and acidic residues. The segment covering Lys-128 to Lys-137 has biased composition (basic residues). The segment at Pro-149–Gln-171 adopts a C2H2-type 1; degenerate zinc-finger fold. 10 C2H2-type zinc fingers span residues Tyr-177–His-199, Tyr-205–His-227, Tyr-233–His-255, His-261–His-283, Tyr-289–His-311, Tyr-317–His-339, Tyr-345–His-367, Tyr-373–His-395, His-401–His-423, and Tyr-429–His-451. Residue Lys-455 forms a Glycyl lysine isopeptide (Lys-Gly) (interchain with G-Cter in SUMO2) linkage. A C2H2-type 12 zinc finger spans residues Phe-457–His-482.

It belongs to the krueppel C2H2-type zinc-finger protein family.

It is found in the nucleus. Functionally, may be involved in transcriptional regulation. This is Zinc finger protein 689 (Znf689) from Rattus norvegicus (Rat).